Here is a 454-residue protein sequence, read N- to C-terminus: Serine/threonine-protein phosphatase C23G10.1 (454 aa).

Asp196, His198, Asp224, and Asn256 together coordinate Mn(2+). The active-site Proton donor is the His257. Mn(2+)-binding residues include His308 and His382.

This sequence belongs to the PPP phosphatase family. PP-1 subfamily. Mn(2+) is required as a cofactor.

The catalysed reaction is O-phospho-L-seryl-[protein] + H2O = L-seryl-[protein] + phosphate. The enzyme catalyses O-phospho-L-threonyl-[protein] + H2O = L-threonyl-[protein] + phosphate. The chain is Serine/threonine-protein phosphatase C23G10.1 from Caenorhabditis elegans.